Reading from the N-terminus, the 617-residue chain is Lipoteichoic acid synthase-like YvgJ (617 aa).

The Cytoplasmic portion of the chain corresponds to 1 to 10; that stretch reads MKGTFFHNQR. Residues 11-31 form a helical membrane-spanning segment; the sequence is FLCFSILFMWIKTYVIYKLGF. Topologically, residues 32–41 are extracellular; it reads DLQIDTLLEE. The chain crosses the membrane as a helical span at residues 42–62; it reads LMLLVNPLSFILPLFGIGLFL. Topologically, residues 63 to 68 are cytoplasmic; that stretch reads KENKQR. The helical transmembrane segment at 69–89 threads the bilayer; sequence AFLLIANLVLTVILISNTIFY. The Extracellular portion of the chain corresponds to 90 to 115; it reads GFYIDFITIPVLFQASNMSDMGSSVK. A helical transmembrane segment spans residues 116-136; that stretch reads ELFHPLFIALFVDLVFLLLFA. Topologically, residues 137-153 are cytoplasmic; sequence RKTKHPQTKAAPHTIKR. The chain crosses the membrane as a helical span at residues 154–171; the sequence is YYAASCGMLLCTLALAEV. Residues 172 to 617 lie on the Extracellular side of the membrane; sequence QQPKLLAHSF…LNGDLLRFSE (446 aa). Glu-251 and Thr-293 together coordinate Mn(2+). Thr-293 is an active-site residue. Substrate is bound at residue His-408. Positions 467 and 468 each coordinate Mn(2+).

The protein belongs to the LTA synthase family. Post-translationally, proteolytically cleaved.

It is found in the cell membrane. Its subcellular location is the secreted. The chain is Lipoteichoic acid synthase-like YvgJ (yvgJ) from Bacillus subtilis (strain 168).